Here is a 448-residue protein sequence, read N- to C-terminus: MGKHYIPNSAHKEEMLKEIGFSSIEELFADVPEGFIREFNVPEGKSEYEVFMEMNEILSKNKTVLEMPTFLGAGTYFHYVPAHVKYLIERSEFLTSYTPYQAEISQGMLQALFEYQSLIAELVGLPVVNSSMYDWGSALGEAALMTVRLHRGKRLKFVVPKHTHPERMQVLKTYTRGANLEIVEVKWNDRGQVDLEDLKEKVNDAAGVYVEIPNFFGLLEENIQEIGEIAHEAGAYFVVGVDPTILGVVEAPGELGADIVVGEASYFGSPMNFGGPRAGIFATRNDPKFIRQMPGRIIGMTKDAEGKRAFVMTLQTREQHIRRAKATSNICSNEALVAVAAAIHIASLGPKGMQELGEVILKNTAYLKKRLSEVAEIPFDGVNFKDVLVKFEKPYQEIHEHLLQKNIHGGYYVKPHFPELGESALFAATETTRKEWIDALIDALREVL.

Belongs to the GcvP family. N-terminal subunit subfamily. In terms of assembly, the glycine cleavage system is composed of four proteins: P, T, L and H. In this organism, the P 'protein' is a heterodimer of two subunits.

The catalysed reaction is N(6)-[(R)-lipoyl]-L-lysyl-[glycine-cleavage complex H protein] + glycine + H(+) = N(6)-[(R)-S(8)-aminomethyldihydrolipoyl]-L-lysyl-[glycine-cleavage complex H protein] + CO2. The glycine cleavage system catalyzes the degradation of glycine. The P protein binds the alpha-amino group of glycine through its pyridoxal phosphate cofactor; CO(2) is released and the remaining methylamine moiety is then transferred to the lipoamide cofactor of the H protein. The protein is Probable glycine dehydrogenase (decarboxylating) subunit 1 of Pyrococcus furiosus (strain ATCC 43587 / DSM 3638 / JCM 8422 / Vc1).